The sequence spans 519 residues: Galactan beta-1,4-galactosyltransferase GALS2 (519 aa).

Residues 28–48 (LALMALLVLCTLATLLPFLPS) traverse the membrane as a helical segment. One can recognise a GT92 domain in the interval 257–471 (DYLYCGSSLY…YHGSISQRRE (215 aa)).

Belongs to the glycosyltransferase 92 family. As to expression, expressed in the midrib of mature leaves, root vasculature, flower filaments, siliques and seeds.

It is found in the golgi apparatus membrane. Its function is as follows. Involved in the biosynthesis of beta-1,4-galactan. Beta-1,4-galactans are abundant polysaccharides in plant cell walls and are found as side-chain of rhamnogalacturonan I, which is a major component of pectin. The chain is Galactan beta-1,4-galactosyltransferase GALS2 from Arabidopsis thaliana (Mouse-ear cress).